Consider the following 417-residue polypeptide: NADH-quinone oxidoreductase subunit D (417 aa).

Belongs to the complex I 49 kDa subunit family. As to quaternary structure, NDH-1 is composed of 14 different subunits. Subunits NuoB, C, D, E, F, and G constitute the peripheral sector of the complex.

It is found in the cell inner membrane. The catalysed reaction is a quinone + NADH + 5 H(+)(in) = a quinol + NAD(+) + 4 H(+)(out). In terms of biological role, NDH-1 shuttles electrons from NADH, via FMN and iron-sulfur (Fe-S) centers, to quinones in the respiratory chain. The immediate electron acceptor for the enzyme in this species is believed to be ubiquinone. Couples the redox reaction to proton translocation (for every two electrons transferred, four hydrogen ions are translocated across the cytoplasmic membrane), and thus conserves the redox energy in a proton gradient. The chain is NADH-quinone oxidoreductase subunit D from Azoarcus sp. (strain BH72).